The sequence spans 359 residues: MAGYARRPGVTPLSRARSLVIPDDDKLGDLEAANPFSFKEFLKTKNLSLSKEDTDSRVYSQEATRHSLGLDRTSPASQTVGYGLEYQQPFFEDPTGAGDLLDEDEDEEDGWNGAYLPSAMEQTHSSRVAASTSPCSTYVSFFSNPSELVGPESLPPWTLSDSDSRISPTGSPSADFTAHGESLGDRHLRTLQISYEALKDENSKLRRKLTEIQSFSETQTEMVRTLERKLEAKMIKEESDYHDLESVVQQVEQNLELMTKRAVKAENHVLKLRQEVSLLQAQVSDFKRENEALRSGQGASLTVVKQNTDVALQNLRVVMNNAHASIKQLVSGAETLNLVAEILKSIDRISEIKDQGEES.

A phosphoserine mark is found at S18 and S74. Residues L100–S125 are required for interaction with PTPN13. The interval S153 to G180 is disordered. The span at L159 to A174 shows a compositional bias: polar residues. Phosphoserine occurs at positions 167 and 171. Residues D185–S295 are a coiled coil.

The protein belongs to the ENTR1 family. Found in a complex with ENTR1, PTPN13 and GIT1. Interacts with PTPN13 (via the FERM domain). Interacts (via N-terminus) with GIT1 (via N- and C-terminus); this interaction is direct. Interacts with NOD2. Interacts (via N-terminus) with IFT88. Interacts with VPS35. In terms of processing, phosphorylated.

It localises to the cytoplasm. It is found in the early endosome. Its subcellular location is the endosome. The protein resides in the recycling endosome. The protein localises to the midbody. It localises to the cytoskeleton. It is found in the microtubule organizing center. Its subcellular location is the centrosome. The protein resides in the cilium basal body. Its function is as follows. Endosome-associated protein that plays a role in membrane receptor sorting, cytokinesis and ciliogenesis. Involved in the endosome-to-plasma membrane trafficking and recycling of SNX27-retromer-dependent cargo proteins, such as GLUT1. Involved in the regulation of cytokinesis; the function may involve PTPN13 and GIT1. Plays a role in the formation of cilia. Involved in cargo protein localization, such as PKD2, at primary cilia. Involved in the presentation of the tumor necrosis factor (TNF) receptor TNFRSF1A on the cell surface, and hence in the modulation of the TNF-induced apoptosis. This Bos taurus (Bovine) protein is Endosome-associated-trafficking regulator 1.